The chain runs to 195 residues: Heavy metal-associated isoprenylated plant protein 18 (195 aa).

Disordered regions lie at residues 36–76 (DVVQ…KPET) and 145–172 (EKEKKDDEPITKDEENEIDRGVYMNPSS). Composition is skewed to basic and acidic residues over residues 47-76 (TVTKKNEEGDIVDKKDETPEVEEKIDKPET) and 145-157 (EKEKKDDEPITKD). Residues 78–149 (TRKLEIHIAF…RIVKMEKEKK (72 aa)) form the HMA domain. Cys-192 carries the cysteine methyl ester modification. Residue Cys-192 is the site of S-farnesyl cysteine attachment. Residues 193–195 (SIS) constitute a propeptide, removed in mature form.

Belongs to the HIPP family.

Its function is as follows. Probable heavy-metal-binding protein. Required for female gametophyte development and function. The chain is Heavy metal-associated isoprenylated plant protein 18 from Arabidopsis thaliana (Mouse-ear cress).